The sequence spans 555 residues: MTSRTRHCARLGIVLLGICCIASGIYLFRNWIDMFTRMRGQEMALSPNSRSFEGWKVSPLPLDFDIYLFNWTNPDDFYVGSNKKPHFEQLGPYRFREKPDKVDIEWHNHNASVSFHKKSWFYFDAAGSNGSLWDKVTTVNSVAHSAARRAAVDWFARTGVNIANKLYRQGVTITKTVDEMLFKGYEHPFISVGKLLRPQDVPYKRIGYHYPRNGSSEFDGDINMFTGADDIAKMGQIHTWNNLTHTGAFEGTCGQVHGSMGEFFPPNLGTKDTVYMYMPKMCRAIPLDYVETVTVHGVTAYKFSGTRHAVDNGTLYPDTRCYCVGGKCMPSGVINIGPCSFNASVYMSFPHFYMADPSYLEAIEGLRPEREKHEFFMALEPNAGVPMDVGGGFQANYYMEPIPGITLYENVPTVMIPMMWCEERVRVSEEIAADIALVPLIVLLGQIVTGILLAGGLICTCWYPTRQVTHFCHSDPKAKASVLRPLNAFGVNSSAATAPVAQLFRNNISSSGNERVGVRLLDYNRDSGIRLESGTMESSHRERLISEDSPDVVVR.

Residues methionine 1–histidine 7 lie on the Cytoplasmic side of the membrane. A helical transmembrane segment spans residues cysteine 8 to phenylalanine 28. Residues arginine 29–aspartate 434 lie on the Extracellular side of the membrane. N-linked (GlcNAc...) asparagine glycosylation is found at asparagine 70, asparagine 110, asparagine 129, asparagine 213, asparagine 242, asparagine 312, and asparagine 342. A helical transmembrane segment spans residues isoleucine 435–glycine 455. Residues glycine 456–arginine 555 are Cytoplasmic-facing.

This sequence belongs to the CD36 family.

The protein localises to the cell membrane. In terms of biological role, (Microbial infection) Plays a role in mycobacterial infection. Mediates infection by M.fortuitum and uptake of M.smegmatis. This is Protein peste from Drosophila melanogaster (Fruit fly).